The chain runs to 628 residues: 69 kDa protein (628 aa).

Disordered regions lie at residues 1-25 (MSNGLPISIGRPCTHDSQRSLSAPN), 141-332 (HFHA…FRPS), 347-398 (GHLE…HRRS), 418-507 (RGKI…RRTF), and 535-628 (QTVL…PDTD). A compositionally biased stretch (low complexity) spans 299 to 312 (PPTTTSRPTGPPSR). Over residues 320–331 (YQSSPHTPNFRP) the composition is skewed to polar residues. The span at 434-450 (GAPPPPRRLPSPAPHPQ) shows a compositional bias: pro residues. The segment covering 497–507 (TEVHAPERRTF) has biased composition (basic and acidic residues).

It belongs to the tymoviridae protein p69 family.

In terms of biological role, acts as a suppressor of RNA-mediated gene silencing, also known as post-transcriptional gene silencing (PTGS), a mechanism of plant viral defense that limits the accumulation of viral RNAs. This is 69 kDa protein from Brassica.